A 318-amino-acid chain; its full sequence is NADH-ubiquinone oxidoreductase chain 1 (318 aa).

A run of 8 helical transmembrane segments spans residues 2 to 22, 76 to 96, 98 to 118, 140 to 160, 171 to 191, 217 to 237, 253 to 273, and 294 to 314; these read FMVNLLLLIIPALIAMAFLTL, TLALSIALLMWSPLPMPHPLI, FNLGLLFMLATSSLAVYSILW, ISYEVTLAIILLSTLLMSGSF, HSWLLLPSWPMAMMWFTSTLA, AGSFALFFMAEYMNIIMMNAL, ELYTMNFMTKTLLLTTLFLWI, and LPLTLALCMWYISMPALTSGI.

This sequence belongs to the complex I subunit 1 family. Core subunit of respiratory chain NADH dehydrogenase (Complex I) which is composed of 45 different subunits.

Its subcellular location is the mitochondrion inner membrane. It carries out the reaction a ubiquinone + NADH + 5 H(+)(in) = a ubiquinol + NAD(+) + 4 H(+)(out). Functionally, core subunit of the mitochondrial membrane respiratory chain NADH dehydrogenase (Complex I) which catalyzes electron transfer from NADH through the respiratory chain, using ubiquinone as an electron acceptor. Essential for the catalytic activity and assembly of complex I. The sequence is that of NADH-ubiquinone oxidoreductase chain 1 (MT-ND1) from Ateles paniscus (Black spider monkey).